A 467-amino-acid chain; its full sequence is D-hydantoinase (467 aa).

3 residues coordinate Zn(2+): His65, His67, and Lys156. An N6-carboxylysine modification is found at Lys156. Tyr161 serves as a coordination point for substrate. Positions 189 and 245 each coordinate Zn(2+). Ser294 contacts substrate. Zn(2+) is bound at residue Asp321. Asn343 provides a ligand contact to substrate.

It belongs to the metallo-dependent hydrolases superfamily. Hydantoinase/dihydropyrimidinase family. As to quaternary structure, homotetramer. Requires Zn(2+) as cofactor. Post-translationally, carboxylation allows a single lysine to coordinate two zinc ions.

In terms of biological role, catalyzes the stereospecific hydrolysis of the cyclic amide bond of D-hydantoin derivatives. The polypeptide is D-hydantoinase (hyuA) (Streptomyces coelicolor (strain ATCC BAA-471 / A3(2) / M145)).